Reading from the N-terminus, the 505-residue chain is Light-independent protochlorophyllide reductase subunit B (505 aa).

D36 provides a ligand contact to [4Fe-4S] cluster. D291 (proton donor) is an active-site residue. Residue 426 to 427 (GM) coordinates substrate.

It belongs to the ChlB/BchB/BchZ family. As to quaternary structure, protochlorophyllide reductase is composed of three subunits; ChlL, ChlN and ChlB. Forms a heterotetramer of two ChlB and two ChlN subunits. The cofactor is [4Fe-4S] cluster.

It carries out the reaction chlorophyllide a + oxidized 2[4Fe-4S]-[ferredoxin] + 2 ADP + 2 phosphate = protochlorophyllide a + reduced 2[4Fe-4S]-[ferredoxin] + 2 ATP + 2 H2O. The protein operates within porphyrin-containing compound metabolism; chlorophyll biosynthesis (light-independent). In terms of biological role, component of the dark-operative protochlorophyllide reductase (DPOR) that uses Mg-ATP and reduced ferredoxin to reduce ring D of protochlorophyllide (Pchlide) to form chlorophyllide a (Chlide). This reaction is light-independent. The NB-protein (ChlN-ChlB) is the catalytic component of the complex. The protein is Light-independent protochlorophyllide reductase subunit B of Gloeobacter violaceus (strain ATCC 29082 / PCC 7421).